Here is a 214-residue protein sequence, read N- to C-terminus: Pyrrolidone-carboxylate peptidase (214 aa).

Catalysis depends on residues E78, C141, and H165.

This sequence belongs to the peptidase C15 family. As to quaternary structure, homotetramer.

It localises to the cytoplasm. It catalyses the reaction Release of an N-terminal pyroglutamyl group from a polypeptide, the second amino acid generally not being Pro.. Its function is as follows. Removes 5-oxoproline from various penultimate amino acid residues except L-proline. The chain is Pyrrolidone-carboxylate peptidase from Streptococcus pneumoniae (strain 70585).